A 123-amino-acid chain; its full sequence is Large ribosomal subunit protein uL14 (123 aa).

It belongs to the universal ribosomal protein uL14 family. As to quaternary structure, part of the 50S ribosomal subunit. Forms a cluster with proteins L3 and L19. In the 70S ribosome, L14 and L19 interact and together make contacts with the 16S rRNA in bridges B5 and B8.

Binds to 23S rRNA. Forms part of two intersubunit bridges in the 70S ribosome. The polypeptide is Large ribosomal subunit protein uL14 (Blochmanniella pennsylvanica (strain BPEN)).